Consider the following 300-residue polypeptide: 1D-myo-inositol 2-acetamido-2-deoxy-alpha-D-glucopyranoside deacetylase (300 aa).

Zn(2+)-binding residues include His13, Asp16, and His147.

Belongs to the MshB deacetylase family. It depends on Zn(2+) as a cofactor.

The enzyme catalyses 1D-myo-inositol 2-acetamido-2-deoxy-alpha-D-glucopyranoside + H2O = 1D-myo-inositol 2-amino-2-deoxy-alpha-D-glucopyranoside + acetate. Its function is as follows. Catalyzes the deacetylation of 1D-myo-inositol 2-acetamido-2-deoxy-alpha-D-glucopyranoside (GlcNAc-Ins) in the mycothiol biosynthesis pathway. In Mycolicibacterium paratuberculosis (strain ATCC BAA-968 / K-10) (Mycobacterium paratuberculosis), this protein is 1D-myo-inositol 2-acetamido-2-deoxy-alpha-D-glucopyranoside deacetylase.